Consider the following 85-residue polypeptide: Large ribosomal subunit protein bL27 (85 aa).

Positions 1 to 22 (MAHKKAGGSSRNGRDSESKRLG) are disordered.

This sequence belongs to the bacterial ribosomal protein bL27 family.

In Tolumonas auensis (strain DSM 9187 / NBRC 110442 / TA 4), this protein is Large ribosomal subunit protein bL27.